Here is a 75-residue protein sequence, read N- to C-terminus: MASQDDPVQREIHQDWANREYIEVITSSIKKIADFLNSFDMSCRSRLATLNEKLTALERRIEYIEARVTKGETLT.

The stretch at 41–72 (MSCRSRLATLNEKLTALERRIEYIEARVTKGE) forms a coiled coil.

The protein belongs to the BRK1 family.

The protein localises to the cytoplasm. It is found in the cytoskeleton. Its function is as follows. Involved in regulation of actin and microtubule organization. Part of a WAVE complex that activates the Arp2/3 complex. This Xenopus laevis (African clawed frog) protein is Probable protein BRICK1-A (brk1-a).